The sequence spans 347 residues: Selenide, water dikinase (347 aa).

C17 is a catalytic residue. Residues K20 and 48–50 (TRD) contribute to the ATP site. D51 serves as a coordination point for Mg(2+). Residues D68, D91, and 139–141 (GHS) each bind ATP. Residue D91 participates in Mg(2+) binding. D227 contacts Mg(2+).

This sequence belongs to the selenophosphate synthase 1 family. Class I subfamily. As to quaternary structure, homodimer. Requires Mg(2+) as cofactor.

The enzyme catalyses hydrogenselenide + ATP + H2O = selenophosphate + AMP + phosphate + 2 H(+). Functionally, synthesizes selenophosphate from selenide and ATP. This Shigella flexneri serotype 5b (strain 8401) protein is Selenide, water dikinase.